The sequence spans 194 residues: Recombination protein RecR (194 aa).

A C4-type zinc finger spans residues cysteine 55–cysteine 70. The 94-residue stretch at serine 78–proline 171 folds into the Toprim domain.

The protein belongs to the RecR family.

May play a role in DNA repair. It seems to be involved in an RecBC-independent recombinational process of DNA repair. It may act with RecF and RecO. The chain is Recombination protein RecR from Thermus thermophilus (strain ATCC 27634 / DSM 579 / HB8).